Reading from the N-terminus, the 852-residue chain is Protein Shroom1 (852 aa).

Methionine 1 is modified (N-acetylmethionine). A Phosphoserine modification is found at serine 18. Disordered stretches follow at residues 34-54 (SSFS…GTDL), 81-109 (TSPR…PLNR), and 125-218 (AAQA…ANQQ). At threonine 103 the chain carries Phosphothreonine. Residues 125–144 (AAQAAEPPSPPASRAAYRQR) are compositionally biased toward low complexity. Residues serine 133 and serine 137 each carry the phosphoserine modification. Residues 145-233 (LQGAQRRVLR…SEPGKLDRVG (89 aa)) form the ASD1 domain. The segment covering 152 to 164 (VLRETSFQRKELR) has biased composition (basic and acidic residues). A phosphoserine mark is found at serine 166, serine 190, and serine 224. 4 disordered regions span residues 276–320 (LPET…GSGG), 399–431 (MRSP…QRTG), 464–496 (SRPT…TAAE), and 823–852 (DLGH…LLLT). Positions 279-289 (TQPQGSMNLDS) are enriched in polar residues. Residues 301–313 (ASRSRSASGEVLG) show a composition bias toward low complexity. A compositionally biased stretch (polar residues) spans 465-479 (RPTSHTPTGTANDNI). One can recognise an ASD2 domain in the interval 543–825 (EELVQELARL…QLDAIRDDLG (283 aa)). Residues 830 to 852 (SPSPARPPGTCPPVQPPFPLLLT) are compositionally biased toward pro residues.

The protein belongs to the shroom family. As to quaternary structure, interacts with F-actin.

The protein resides in the cytoplasm. The protein localises to the cytoskeleton. In terms of biological role, may be involved in the assembly of microtubule arrays during cell elongation. This Homo sapiens (Human) protein is Protein Shroom1 (SHROOM1).